The chain runs to 299 residues: Zeta-sarcoglycan (299 aa).

Topologically, residues 1 to 37 (MTREQYILATQQNNLPRTENAQLYPVGIYGWRKRCLY) are cytoplasmic. The chain crosses the membrane as a helical; Signal-anchor for type II membrane protein span at residues 38–58 (FFVLLLLVTMIVNLAMTIWIL). The Extracellular segment spans residues 59-299 (KVMNFTVDGM…QSSSNICLWS (241 aa)). 2 N-linked (GlcNAc...) asparagine glycosylation sites follow: asparagine 62 and asparagine 110. A disulfide bridge connects residues cysteine 273 and cysteine 289.

The protein belongs to the sarcoglycan beta/delta/gamma/zeta family.

It localises to the cell membrane. Its subcellular location is the sarcolemma. The protein resides in the cytoplasm. The protein localises to the cytoskeleton. In terms of biological role, component of the sarcoglycan complex, a subcomplex of the dystrophin-glycoprotein complex which forms a link between the F-actin cytoskeleton and the extracellular matrix. May play a role in the maintenance of striated muscle membrane stability. The protein is Zeta-sarcoglycan (SGCZ) of Homo sapiens (Human).